The sequence spans 481 residues: Aspartyl/glutamyl-tRNA(Asn/Gln) amidotransferase subunit B (481 aa).

This sequence belongs to the GatB/GatE family. GatB subfamily. Heterotrimer of A, B and C subunits.

It carries out the reaction L-glutamyl-tRNA(Gln) + L-glutamine + ATP + H2O = L-glutaminyl-tRNA(Gln) + L-glutamate + ADP + phosphate + H(+). The catalysed reaction is L-aspartyl-tRNA(Asn) + L-glutamine + ATP + H2O = L-asparaginyl-tRNA(Asn) + L-glutamate + ADP + phosphate + 2 H(+). In terms of biological role, allows the formation of correctly charged Asn-tRNA(Asn) or Gln-tRNA(Gln) through the transamidation of misacylated Asp-tRNA(Asn) or Glu-tRNA(Gln) in organisms which lack either or both of asparaginyl-tRNA or glutaminyl-tRNA synthetases. The reaction takes place in the presence of glutamine and ATP through an activated phospho-Asp-tRNA(Asn) or phospho-Glu-tRNA(Gln). This chain is Aspartyl/glutamyl-tRNA(Asn/Gln) amidotransferase subunit B, found in Pseudomonas fluorescens (strain ATCC BAA-477 / NRRL B-23932 / Pf-5).